Reading from the N-terminus, the 935-residue chain is Progesterone receptor (935 aa).

An AF3; mediates transcriptional activation region spans residues 1 to 164; the sequence is MTELKAKGPR…PATQRVLSPL (164 aa). Positions 1-256 are disordered; the sequence is MTELKAKGPR…AAAGGGAAAV (256 aa). Residues 1–568 form a modulating, Pro-Rich region; that stretch reads MTELKAKGPR…YSFESLPQKI (568 aa). Ser-20 carries the post-translational modification Phosphoserine. Residues 55–59 carry the LXXL motif 1 motif; it reads LDGLL. A Phosphoserine modification is found at Ser-81. The LXXL motif 2 signature appears at 115-119; the sequence is LDTLL. Residues Ser-130 and Ser-162 each carry the phosphoserine modification. Residues 165 to 305 are mediates transcriptional transrepression; sequence MSRSGGKAGD…LATTTMDFTH (141 aa). Residues 183–187 carry the Nuclear localization signal motif; that stretch reads KVLPR. A phosphoserine mark is found at Ser-190 and Ser-213. Over residues 220–231 the composition is skewed to acidic residues; that stretch reads EVEEEDGSESED. Residues 232 to 246 are compositionally biased toward low complexity; that stretch reads SAGPLLKGKPRALGG. Residue Ser-294 is modified to Phosphoserine; by MAPK1. Positions 328–353 are disordered; it reads SYDGGAGAASAFAPPRSSPSASSTPV. Low complexity predominate over residues 335-350; sequence AASAFAPPRSSPSASS. Ser-345 carries the post-translational modification Phosphoserine; by MAPK. Lys-388 is covalently cross-linked (Glycyl lysine isopeptide (Lys-Gly) (interchain with G-Cter in SUMO); alternate). Lys-388 is covalently cross-linked (Glycyl lysine isopeptide (Lys-Gly) (interchain with G-Cter in ubiquitin); alternate). Ser-400 carries the post-translational modification Phosphoserine; by CDK2. A disordered region spans residues 415 to 452; it reads PDFPLGPPPPLPPRAPPSRPGEAAVTAAPAGASVSSAS. The span at 418–433 shows a compositional bias: pro residues; it reads PLGPPPPLPPRAPPSR. Residues 434–452 are compositionally biased toward low complexity; sequence PGEAAVTAAPAGASVSSAS. The interval 456–548 is AF1; mediates transcriptional activation; the sequence is STLECILYKA…VYPPYLNYLR (93 aa). A Glycyl lysine isopeptide (Lys-Gly) (interchain with G-Cter in SUMO) cross-link involves residue Lys-533. 2 NR C4-type zinc fingers span residues 569–589 and 605–629; these read CLIC…CGSC and CAGR…LRKC. A DNA-binding region (nuclear receptor) is located at residues 569–641; the sequence is CLICGDEASG…AGMVLGGRKF (73 aa). At Ser-678 the chain carries Phosphoserine. The 235-residue stretch at 681-915 folds into the NR LBD domain; it reads QDIQLIPPLI…EFPEMMSEVI (235 aa). The segment at 689-935 is AF2; mediates transcriptional activation; it reads LINLLVSIEP…MVKPLLFHKK (247 aa). Arg-768 lines the progesterone pocket.

It belongs to the nuclear hormone receptor family. Interacts with SMARD1 and UNC45A. Interacts with CUEDC2; the interaction promotes ubiquitination, decreases sumoylation, and represses transcriptional activity. Interacts with PIAS3; the interaction promotes sumoylation of PR in a hormone-dependent manner, inhibits DNA-binding, and alters nuclear export. Interacts with SP1; the interaction requires ligand-induced phosphorylation on Ser-345 by ERK1/2-MAPK. Interacts with PRMT2. Interacts with NCOA2 and NCOA1. Interacts with KLF9. Interacts with GTF2B. Post-translationally, phosphorylated on multiple serine sites. Several of these sites are hormone-dependent. Phosphorylation on Ser-294 is highly hormone-dependent and modulates ubiquitination and sumoylation on Lys-388. Phosphorylation on Ser-345 also requires induction by hormone. Basal phosphorylation on Ser-81, Ser-162, Ser-190 and Ser-400 is increased in response to progesterone and can be phosphorylated in vitro by the CDK2-A1 complex. Increased levels of phosphorylation on Ser-400 also in the presence of EGF, heregulin, IGF, PMA and FBS. Phosphorylation at this site by CDK2 is ligand-independent, and increases nuclear translocation and transcriptional activity. Phosphorylation at Ser-162 and Ser-294, but not at Ser-190, is impaired during the G(2)/M phase of the cell cycle. Phosphorylation on Ser-345 by ERK1/2 MAPK is required for interaction with SP1. In terms of processing, sumoylation is hormone-dependent and represses transcriptional activity. Sumoylation on all three sites is enhanced by PIAS3. Desumoylated by SENP1. Sumoylation on Lys-388, the main site of sumoylation, is repressed by ubiquitination on the same site, and modulated by phosphorylation at Ser-294. Ubiquitination is hormone-dependent and represses sumoylation on the same site. Promoted by MAPK-mediated phosphorylation on Ser-294. Ubiquitinated by UBR5, leading to its degradation: UBR5 specifically recognizes and binds ligand-bound PGR when it is not associated with coactivators (NCOAs). In presence of NCOAs, the UBR5-degron is not accessible, preventing its ubiquitination and degradation. Post-translationally, palmitoylated by ZDHHC7 and ZDHHC21. Palmitoylation is required for plasma membrane targeting and for rapid intracellular signaling via ERK and AKT kinases and cAMP generation.

It localises to the nucleus. It is found in the cytoplasm. Its function is as follows. The steroid hormones and their receptors are involved in the regulation of eukaryotic gene expression and affect cellular proliferation and differentiation in target tissues. Transcriptional activator of several progesteron-dependent promoters in a variety of cell types. Involved in activation of SRC-dependent MAPK signaling on hormone stimulation. In Macaca sylvanus (Barbary macaque), this protein is Progesterone receptor (PGR).